The chain runs to 355 residues: MSGQGKRLMVMAGGTGGHVFPGLAVAHHLMAQGWQVRWLGTADRMEADLVPKHGIEIDFIRISGLRGKGIKALIAAPLRIFNAWRQARAIMKAYKPDVVLGMGGYVSGPGGLAAWSLGIPVVLHEQNGIAGLTNKWLAKIATKVMQAFPGAFPNAEVVGNPVRTDVLALPLPQQRLAGREGPVRVLVVGGSQGARILNQTMPQVAAKLGDSVTIWHQSGKGSQQSVEQAYAEAGQPQHKVTEFIDDMAAAYAWADVVVCRSGALTVSEIAAAGLPALFVPFQHKDRQQYWNALPLEKAGAAKIIEQPQLSVDAVANTLAGWSRETLLTMAERARAASIPDATERVANEVSRAARA.

Residues 15–17 (TGG), Asn-127, Arg-163, Ser-191, Ile-244, 263–268 (ALTVSE), and Gln-288 contribute to the UDP-N-acetyl-alpha-D-glucosamine site.

It belongs to the glycosyltransferase 28 family. MurG subfamily.

The protein localises to the cell inner membrane. The enzyme catalyses di-trans,octa-cis-undecaprenyl diphospho-N-acetyl-alpha-D-muramoyl-L-alanyl-D-glutamyl-meso-2,6-diaminopimeloyl-D-alanyl-D-alanine + UDP-N-acetyl-alpha-D-glucosamine = di-trans,octa-cis-undecaprenyl diphospho-[N-acetyl-alpha-D-glucosaminyl-(1-&gt;4)]-N-acetyl-alpha-D-muramoyl-L-alanyl-D-glutamyl-meso-2,6-diaminopimeloyl-D-alanyl-D-alanine + UDP + H(+). It participates in cell wall biogenesis; peptidoglycan biosynthesis. Its function is as follows. Cell wall formation. Catalyzes the transfer of a GlcNAc subunit on undecaprenyl-pyrophosphoryl-MurNAc-pentapeptide (lipid intermediate I) to form undecaprenyl-pyrophosphoryl-MurNAc-(pentapeptide)GlcNAc (lipid intermediate II). The sequence is that of UDP-N-acetylglucosamine--N-acetylmuramyl-(pentapeptide) pyrophosphoryl-undecaprenol N-acetylglucosamine transferase from Escherichia coli O139:H28 (strain E24377A / ETEC).